Reading from the N-terminus, the 94-residue chain is Pyrimidine/purine nucleoside phosphorylase (94 aa).

It belongs to the nucleoside phosphorylase PpnP family.

It carries out the reaction a purine D-ribonucleoside + phosphate = a purine nucleobase + alpha-D-ribose 1-phosphate. The enzyme catalyses adenosine + phosphate = alpha-D-ribose 1-phosphate + adenine. It catalyses the reaction cytidine + phosphate = cytosine + alpha-D-ribose 1-phosphate. The catalysed reaction is guanosine + phosphate = alpha-D-ribose 1-phosphate + guanine. It carries out the reaction inosine + phosphate = alpha-D-ribose 1-phosphate + hypoxanthine. The enzyme catalyses thymidine + phosphate = 2-deoxy-alpha-D-ribose 1-phosphate + thymine. It catalyses the reaction uridine + phosphate = alpha-D-ribose 1-phosphate + uracil. The catalysed reaction is xanthosine + phosphate = alpha-D-ribose 1-phosphate + xanthine. Functionally, catalyzes the phosphorolysis of diverse nucleosides, yielding D-ribose 1-phosphate and the respective free bases. Can use uridine, adenosine, guanosine, cytidine, thymidine, inosine and xanthosine as substrates. Also catalyzes the reverse reactions. The chain is Pyrimidine/purine nucleoside phosphorylase from Klebsiella pneumoniae (strain 342).